The chain runs to 574 residues: Multidrug and toxin extrusion protein 1 (574 aa).

Over 1-51 the chain is Cytoplasmic; that stretch reads MEGQAAETNHRAETVVRAELCLSAEQGPETTAYSQKRCLFLPMEVWQEAQQ. Residues 52–72 form a helical membrane-spanning segment; the sequence is LLALAAPAFLSQLMIFLISIV. Over 73–86 the chain is Extracellular; sequence SSIFCGHLGKVELD. A helical transmembrane segment spans residues 87–107; sequence AVSLAITIINITGVAVGTGLA. The Cytoplasmic segment spans residues 108 to 133; sequence GACDTLISQTFGGSNLKLVGIILQRG. The helical transmembrane segment at 134–154 threads the bilayer; it reads ILILLLFCFPCWALLINTESI. At 155-168 the chain is on the extracellular side; sequence LLLFRQDPEVSKLT. A helical transmembrane segment spans residues 169–189; sequence QIYVLIFLPALPAAFLYQLLA. The Cytoplasmic segment spans residues 190-204; the sequence is KYLQNQGIIYPQVLT. A helical membrane pass occupies residues 205-225; it reads GFIANIFNALFNYILLYVLGL. Residues 226–230 are Extracellular-facing; it reads GVMGS. Residues 231–251 form a helical membrane-spanning segment; sequence ACANTVSQFIQMILLFLYIVW. Residues 252 to 271 lie on the Cytoplasmic side of the membrane; the sequence is RRLYADTWGGWSQACFEEWG. Residues 272–291 traverse the membrane as a helical segment; it reads AFIRLAVASMLMLCIEWWAF. Residues 292–309 lie on the Extracellular side of the membrane; that stretch reads EISMFLAGVLGMVDLAAQ. The helical transmembrane segment at 310–330 threads the bilayer; sequence AIIYQVAIVVYLIPLGLCIAG. Topologically, residues 331-350 are cytoplasmic; the sequence is SIRVGHGLGAGNTEQAKRSA. The helical transmembrane segment at 351-371 threads the bilayer; sequence LVVLCMTELCALLSGILLATL. Residues 372-384 lie on the Extracellular side of the membrane; that stretch reads KDVVAYIFTSDPN. A helical transmembrane segment spans residues 385-405; it reads IVALVSYVLPVYSACLLFDAC. The Cytoplasmic portion of the chain corresponds to 406 to 430; it reads VAACGGILRGSGKLKVGAISHTVGY. Residues 431 to 451 form a helical membrane-spanning segment; it reads YVIGLPLGISLMFAAKLGIIG. Topologically, residues 452–453 are extracellular; that stretch reads FW. The helical transmembrane segment at 454-472 threads the bilayer; it reads FGILACGIAQSIFLIIFVF. At 473–549 the chain is on the cytoplasmic side; sequence KIDWKRASEE…AGAAQHTRTL (77 aa). A disordered region spans residues 500–541; sequence KPSVYQEGCPTEQGDVDPGNVESIEFSQSSTSSEGTSPTPAG. Residues 521 to 538 are compositionally biased toward low complexity; it reads ESIEFSQSSTSSEGTSPT. Residues 550-570 traverse the membrane as a helical segment; sequence ILTRGLALGCAVGTLIIGIVI. Over 571-574 the chain is Extracellular; it reads RLSV.

It belongs to the multi antimicrobial extrusion (MATE) (TC 2.A.66.1) family.

It is found in the cell membrane. The protein resides in the apical cell membrane. It catalyses the reaction thiamine(out) + H(+)(in) = thiamine(in) + H(+)(out). The catalysed reaction is estrone 3-sulfate(in) + H(+)(out) = estrone 3-sulfate(out) + H(+)(in). It carries out the reaction creatinine(in) + H(+)(out) = creatinine(out) + H(+)(in). The enzyme catalyses agmatine(in) + H(+)(out) = agmatine(out) + H(+)(in). Functionally, multidrug efflux pump that functions as a H(+)/organic cation antiporter. Mediates the secretion of cationic compounds including drugs, toxins and endogenous metabolites. Plays a role physiological role in the excretion of drugs, toxins and endogenous metabolites through the kidney and liver, into urine and bile respectively. The sequence is that of Multidrug and toxin extrusion protein 1 (slc47a1) from Xenopus tropicalis (Western clawed frog).